Reading from the N-terminus, the 516-residue chain is Multicopper oxidase CueO (516 aa).

Residues 1-28 (MQRRDFLKYSVALGVASALPLWSRAVFA) constitute a signal peptide (tat-type signal). Plastocyanin-like domains lie at 55 to 165 (GQST…IEDD), 227 to 292 (PRGW…DNKP), and 399 to 516 (GGKF…GFTV). 4 residues coordinate Cu cation: H101, H103, H141, and H143. The Cu cation site is built by H443, H446, H448, H499, C500, H501, and H505.

It belongs to the multicopper oxidase family. As to quaternary structure, monomer. It depends on Cu cation as a cofactor. Post-translationally, predicted to be exported by the Tat system. The position of the signal peptide cleavage has not been experimentally proven.

Its subcellular location is the periplasm. The catalysed reaction is 4 Cu(+) + O2 + 4 H(+) = 4 Cu(2+) + 2 H2O. In terms of biological role, multicopper oxidase involved in copper homeostasis and copper tolerance under aerobic conditions. Is responsible for the oxidation of Cu(+) to the less harmful Cu(2+) in the periplasm, thereby preventing Cu(+) from entering the cytoplasm. The sequence is that of Multicopper oxidase CueO (cueO) from Escherichia coli O157:H7.